A 281-amino-acid chain; its full sequence is ATP phosphoribosyltransferase (281 aa).

The protein belongs to the ATP phosphoribosyltransferase family. Long subfamily. The cofactor is Mg(2+).

It is found in the cytoplasm. It catalyses the reaction 1-(5-phospho-beta-D-ribosyl)-ATP + diphosphate = 5-phospho-alpha-D-ribose 1-diphosphate + ATP. Its pathway is amino-acid biosynthesis; L-histidine biosynthesis; L-histidine from 5-phospho-alpha-D-ribose 1-diphosphate: step 1/9. Feedback inhibited by histidine. Its function is as follows. Catalyzes the condensation of ATP and 5-phosphoribose 1-diphosphate to form N'-(5'-phosphoribosyl)-ATP (PR-ATP). Has a crucial role in the pathway because the rate of histidine biosynthesis seems to be controlled primarily by regulation of HisG enzymatic activity. In Corynebacterium glutamicum (strain R), this protein is ATP phosphoribosyltransferase.